A 312-amino-acid chain; its full sequence is R2-like ligand binding oxidase (312 aa).

E68, E101, and H104 together coordinate Mn(2+). A cross-link (3-(O4'-tyrosyl)-valine (Val-Tyr)) is located at residues 71-162 (VTQDIQPFMA…AAQVRASATY (92 aa)). Residue E101 coordinates Fe cation. Fe cation contacts are provided by E167, E202, and H205.

Belongs to the ribonucleoside diphosphate reductase small chain family. R2-like ligand binding oxidase subfamily. As to quaternary structure, homodimer. Fe cation serves as cofactor. It depends on Mn(2+) as a cofactor.

In terms of biological role, probable oxidase that might be involved in lipid metabolism. This Mycobacterium sp. (strain JLS) protein is R2-like ligand binding oxidase.